The primary structure comprises 243 residues: MKVEKRKIDTESIKKFWVGLLEGSGSIQVNHWKKKNLQFRLEIKLKNCNENFLMFKDIQKAIGGYIRFETSKKKERDQVVWIVDQKTEIERIIKIFDQYALLTKQKQDQLNFLKENLQRQDVNWYLKERDNKYKVRVAHPDYKIKDITYFNEWLSGFVEAEGCFCIRTSTYHSFSISQKYEKVLLSQIKEFFNITTQIKESKKNIFLLEVYKKVILQKLIHHFIEYPLLGEKNKSFERFKNFF.

This sequence belongs to the LAGLIDADG endonuclease family.

The protein localises to the mitochondrion. In terms of biological role, mitochondrial DNA endonuclease involved in intron homing. This is Probable intron-encoded endonuclease aI3 (aI3) from Dictyostelium citrinum (Slime mold).